The chain runs to 365 residues: Ferrochelatase (365 aa).

Residues His211 and Glu292 each contribute to the Fe cation site.

This sequence belongs to the ferrochelatase family.

The protein localises to the cytoplasm. It catalyses the reaction heme b + 2 H(+) = protoporphyrin IX + Fe(2+). It participates in porphyrin-containing compound metabolism; protoheme biosynthesis; protoheme from protoporphyrin-IX: step 1/1. In terms of biological role, catalyzes the ferrous insertion into protoporphyrin IX. This Aromatoleum aromaticum (strain DSM 19018 / LMG 30748 / EbN1) (Azoarcus sp. (strain EbN1)) protein is Ferrochelatase.